The chain runs to 426 residues: S-adenosylmethionine synthase (426 aa).

His-22 is a binding site for ATP. A Mg(2+)-binding site is contributed by Asp-24. Glu-50 contacts K(+). L-methionine is bound by residues Glu-63 and Gln-106. The tract at residues 106-116 (QSPDISQGVTA) is flexible loop. ATP is bound by residues 181–183 (DGK), 257–258 (KF), Asp-266, 272–273 (RK), Ala-289, and Lys-293. Residue Asp-266 coordinates L-methionine. L-methionine is bound at residue Lys-297.

It belongs to the AdoMet synthase family. In terms of assembly, homotetramer; dimer of dimers. The cofactor is Mg(2+). K(+) is required as a cofactor.

It localises to the cytoplasm. It carries out the reaction L-methionine + ATP + H2O = S-adenosyl-L-methionine + phosphate + diphosphate. It participates in amino-acid biosynthesis; S-adenosyl-L-methionine biosynthesis; S-adenosyl-L-methionine from L-methionine: step 1/1. Catalyzes the formation of S-adenosylmethionine (AdoMet) from methionine and ATP. The overall synthetic reaction is composed of two sequential steps, AdoMet formation and the subsequent tripolyphosphate hydrolysis which occurs prior to release of AdoMet from the enzyme. This Synechocystis sp. (strain ATCC 27184 / PCC 6803 / Kazusa) protein is S-adenosylmethionine synthase.